The primary structure comprises 191 residues: MAEPLLVVGLGNPGPTYAKTRHNLGFMVADVLAGRIGSAFKVHKKSGAEVVTGRLAGTSVVLAKPRCYMNESGRQVGPLAKFYSVPPQQIVVIHDELDIDFGRIRLKLGGGEGGHNGLRSVASALGTKNFHRVRIGVGRPPGRKDPAAFVLENFTAAERAEVPTIVEQAADATELLIAQGLEPAQNTVHAW.

Tyr-17 is a tRNA binding site. The active-site Proton acceptor is His-22. Residues Tyr-68, Asn-70, and Asn-116 each contribute to the tRNA site.

This sequence belongs to the PTH family. Monomer.

The protein resides in the cytoplasm. It catalyses the reaction an N-acyl-L-alpha-aminoacyl-tRNA + H2O = an N-acyl-L-amino acid + a tRNA + H(+). Hydrolyzes ribosome-free peptidyl-tRNAs (with 1 or more amino acids incorporated), which drop off the ribosome during protein synthesis, or as a result of ribosome stalling. Its function is as follows. Catalyzes the release of premature peptidyl moieties from peptidyl-tRNA molecules trapped in stalled 50S ribosomal subunits, and thus maintains levels of free tRNAs and 50S ribosomes. The protein is Peptidyl-tRNA hydrolase of Mycolicibacterium smegmatis (strain ATCC 700084 / mc(2)155) (Mycobacterium smegmatis).